The sequence spans 126 residues: Fluoride-specific ion channel FluC 2 (126 aa).

4 helical membrane-spanning segments follow: residues 11-31 (IFLI…LCEL), 34-54 (GQLG…MIMY), 66-86 (GKIA…TFAV), and 93-113 (FIPA…GVFF). Gly76 and Thr79 together coordinate Na(+).

It belongs to the fluoride channel Fluc/FEX (TC 1.A.43) family.

Its subcellular location is the cell membrane. The catalysed reaction is fluoride(in) = fluoride(out). Na(+) is not transported, but it plays an essential structural role and its presence is essential for fluoride channel function. Functionally, fluoride-specific ion channel. Important for reducing fluoride concentration in the cell, thus reducing its toxicity. The protein is Fluoride-specific ion channel FluC 2 of Methanosarcina acetivorans (strain ATCC 35395 / DSM 2834 / JCM 12185 / C2A).